A 147-amino-acid chain; its full sequence is E3 ubiquitin-protein ligase RHA2B (147 aa).

The segment at 74–116 adopts an RING-type; atypical zinc-finger fold; the sequence is CIVCLSKLKTGEEVRKLDCRHVFHKQCLEGWLQHLNFNCPLCR.

As to quaternary structure, interacts with NAC19. In terms of tissue distribution, expressed in vascular tissue, root tips, embryos and pistils.

It is found in the cytoplasm. Its subcellular location is the nucleus. The enzyme catalyses S-ubiquitinyl-[E2 ubiquitin-conjugating enzyme]-L-cysteine + [acceptor protein]-L-lysine = [E2 ubiquitin-conjugating enzyme]-L-cysteine + N(6)-ubiquitinyl-[acceptor protein]-L-lysine.. Its pathway is protein modification; protein ubiquitination. Functionally, E3 ubiquitin-protein ligase involved in the positive regulation of abscisic acid (ABA) signaling and responses to salt and osmotic stresses during seed germination and early seedling development. Acts additively with RHA2A in regulating ABA signaling and drought response. Possesses E3 ubiquitin ligase activity in vitro. The polypeptide is E3 ubiquitin-protein ligase RHA2B (Arabidopsis thaliana (Mouse-ear cress)).